Consider the following 146-residue polypeptide: Large ribosomal subunit protein uL15 (146 aa).

A compositionally biased stretch (basic and acidic residues) spans 1 to 13; that stretch reads MKLHELKAAEGSR. Residues 1–51 are disordered; that stretch reads MKLHELKAAEGSRKVRNRVGRGTSSGNGKTSGRGQKGQKARSGGGVRLGFE. Composition is skewed to gly residues over residues 23–35 and 42–51; these read TSSG…GRGQ and SGGGVRLGFE.

This sequence belongs to the universal ribosomal protein uL15 family. Part of the 50S ribosomal subunit.

In terms of biological role, binds to the 23S rRNA. The chain is Large ribosomal subunit protein uL15 from Streptococcus pyogenes serotype M1.